The following is a 1275-amino-acid chain: Inner capsid protein lambda-1 (1275 aa).

A compositionally biased stretch (basic residues) spans methionine 1–serine 12. Residues methionine 1–proline 149 form a disordered region. Basic and acidic residues-rich tracts occupy residues aspartate 18–asparagine 35 and asparagine 75–lysine 117. Residues alanine 118–proline 149 are compositionally biased toward polar residues. A C2H2-type zinc finger spans residues tyrosine 181–histidine 203.

Belongs to the orthoreovirus lambda-1 protein family. In terms of assembly, homodecamer; each decamer is made up of two conformers of VP2, called VP2A and VP2B. 12 homodecamers assemble to form an icosahedral capsid. Interacts with protein mu-NS; in viral inclusions. The cofactor is Mg(2+). Requires Mn(2+) as cofactor.

Its subcellular location is the virion. It catalyses the reaction ATP + H2O = ADP + phosphate + H(+). Inner capsid protein that self-assembles to form an icosahedral capsid with a T=2 symmetry, which consists of 120 copies of VP2, with channels at each of its five-fold vertices. This capsid constitutes the innermost concentric layer of the viral mature particle. In terms of biological role, displays NTPase, RNA 5'-triphosphatase (RTPase) and RNA helicase activities. Helicase activity might be involved in unwinding or reannealing dsRNA during RNA synthesis. RTPase enzymatic activity represents the first step in RNA capping, which yields a 5'-diphosphorylated plus-strand RNA. This chain is Inner capsid protein lambda-1 (L3), found in Reovirus type 3 (strain Dearing) (T3D).